A 339-amino-acid polypeptide reads, in one-letter code: Senescence-specific cysteine protease SAG39 (339 aa).

An N-terminal signal peptide occupies residues 1–23 (MAMAKALLFAILGCLCLCSAVLA). 3 disulfide bridges follow: C144-C187, C178-C220, and C276-C328. C147 is a catalytic residue. Residues H282 and N303 contribute to the active site.

Belongs to the peptidase C1 family.

It is found in the vacuole. Cysteine protease that may have a developmental senescence specific cell death function during apoptosis, heavy metal detoxification, and hypersensitive response. In Oryza sativa subsp. indica (Rice), this protein is Senescence-specific cysteine protease SAG39.